The sequence spans 187 residues: MNTQKRQQIRTEIRKIRANLTALQQHQAEQSVTQHALNLIEQRQAKNIALYFSFDGEISTKALIQSLWMQNKNVYLPVLHPFTKHYLLFLRYLPDTPMKQNQFGIWEPKLNVQNVLPLNELDILFTPLVAFDKKGNRLGMGGGFYDRTLQNWQNKSFIPVGLAYQCQQVENLPTEHWDVPLFDILVG.

ATP contacts are provided by residues 6 to 10 (RQQIR), 139 to 146 (GMGGGFYD), and D178.

Belongs to the 5-formyltetrahydrofolate cyclo-ligase family.

It catalyses the reaction (6S)-5-formyl-5,6,7,8-tetrahydrofolate + ATP = (6R)-5,10-methenyltetrahydrofolate + ADP + phosphate. It functions in the pathway one-carbon metabolism; tetrahydrofolate interconversion. In terms of biological role, involved in the removal of 5-formyltetrahydrofolate. In vitro, it is a potent inhibitor of various folate-dependent enzymes in the C1 metabolism network and in vivo it might function as a folate storage. 5-formyltetrahydrofolate is also used as an antifolate rescue agent in cancer chemotherapy. Catalyzes the irreversible ATP-dependent transformation of 5-formyltetrahydrofolate (5-CHO-THF) to form 5,10-methenyltetrahydrofolate (5,10-CH=THF). The reverse reaction is catalyzed by the serine hydroxymethyltransferase GlyA (SHMT). The protein is 5-formyltetrahydrofolate cyclo-ligase of Haemophilus influenzae (strain ATCC 51907 / DSM 11121 / KW20 / Rd).